Here is a 566-residue protein sequence, read N- to C-terminus: Peroxisomal leader peptide-processing protease (566 aa).

The segment at Ala319–Gln531 is serine protease. Residues His372, Asp408, and Ser481 each act as charge relay system in the active site.

Belongs to the peptidase S1B family. As to quaternary structure, homodimer. Forms a heterodimer with the C-terminal cleavage product (45 kDa form). Forms a heterodimer with the N-terminal cleavage product (15 kDa form). Interacts with PEX5. Interacts with LONP2. In terms of processing, self-cleavage gives rise to an N-terminal 15-kDa fragment and C-terminal 45-kDa fragment upon import into the peroxisomes. The full-lengh TYSND1 is the active the proteolytic processing of PTS1- and PTS2-proteins and in self-cleavage, and intermolecular self-cleavage of TYSND1 down-regulates its protease activity.

It is found in the peroxisome. Peroxisomal protease that mediates both the removal of the leader peptide from proteins containing a PTS2 target sequence and processes several PTS1-containing proteins. Catalyzes the processing of PTS1-proteins involved in the peroxisomal beta-oxidation of fatty acids. In Homo sapiens (Human), this protein is Peroxisomal leader peptide-processing protease (TYSND1).